The sequence spans 314 residues: Nerylneryl diphosphate synthase CPT2, chloroplastic (314 aa).

The N-terminal 61 residues, 1–61 (MNSSIVSQHF…MSDRGLSKIS (61 aa)), are a transit peptide targeting the chloroplast. The active site involves aspartate 97.

It belongs to the UPP synthase family. Mg(2+) serves as cofactor. In terms of tissue distribution, expressed in stems. Expressed in petiolules. Expressed at low levels in leaf trichomes, old leaf and roots.

It is found in the plastid. Its subcellular location is the chloroplast. It carries out the reaction 3 isopentenyl diphosphate + dimethylallyl diphosphate = nerylneryl diphosphate + 3 diphosphate. It catalyses the reaction isopentenyl diphosphate + dimethylallyl diphosphate = neryl diphosphate + diphosphate. The enzyme catalyses neryl diphosphate + isopentenyl diphosphate = (2Z,6Z)-farnesyl diphosphate + diphosphate. The catalysed reaction is (2Z,6Z)-farnesyl diphosphate + isopentenyl diphosphate = nerylneryl diphosphate + diphosphate. In terms of biological role, uses dimethylallyl diphosphate and isopentenyl diphosphate to catalyze the cis-prenyl chain elongation and produce the 20 carbon product nerylneryl diphosphate. This is Nerylneryl diphosphate synthase CPT2, chloroplastic from Solanum lycopersicum (Tomato).